Reading from the N-terminus, the 238-residue chain is MTTPAYKRVLLKLSGEALMGDDPYGINRATIERMVADVSEVAKLGVELAIVIGGGNIFRGVAPGAQGMDRATADYMGMLATVMNSLALADAMRQVGITARVMSAIAIEQVVEPYVRPKALQYLEEGKIVIFAAGTGNPFFTTDTAAALRGSEIGAEIVLKATKVDGVYSADPNKDPDATRYATITFDEAISKHLQVMDATAFALCRDQKLPIKVFSIVKPGALKRVVMGEDEGTLVHV.

12-15 lines the ATP pocket; sequence KLSG. Gly-54 is a binding site for UMP. Positions 55 and 59 each coordinate ATP. UMP is bound by residues Asp-74 and 135–142; that span reads TGNPFFTT. Residues Thr-162, Tyr-168, and Asp-171 each coordinate ATP.

It belongs to the UMP kinase family. In terms of assembly, homohexamer.

The protein resides in the cytoplasm. It carries out the reaction UMP + ATP = UDP + ADP. Its pathway is pyrimidine metabolism; CTP biosynthesis via de novo pathway; UDP from UMP (UMPK route): step 1/1. With respect to regulation, inhibited by UTP. Functionally, catalyzes the reversible phosphorylation of UMP to UDP. The chain is Uridylate kinase from Janthinobacterium sp. (strain Marseille) (Minibacterium massiliensis).